The following is a 272-amino-acid chain: Shikimate dehydrogenase (NADP(+)) (272 aa).

Shikimate is bound by residues 14–16 (SKS) and T61. K65 functions as the Proton acceptor in the catalytic mechanism. An NADP(+)-binding site is contributed by E77. 2 residues coordinate shikimate: N86 and D102. Residues 126–130 (GAGGA), 149–154 (NRTQEK), and M213 each bind NADP(+). Y215 serves as a coordination point for shikimate. G237 is an NADP(+) binding site.

Belongs to the shikimate dehydrogenase family. Homodimer.

It carries out the reaction shikimate + NADP(+) = 3-dehydroshikimate + NADPH + H(+). It functions in the pathway metabolic intermediate biosynthesis; chorismate biosynthesis; chorismate from D-erythrose 4-phosphate and phosphoenolpyruvate: step 4/7. Functionally, involved in the biosynthesis of the chorismate, which leads to the biosynthesis of aromatic amino acids. Catalyzes the reversible NADPH linked reduction of 3-dehydroshikimate (DHSA) to yield shikimate (SA). This is Shikimate dehydrogenase (NADP(+)) from Erwinia tasmaniensis (strain DSM 17950 / CFBP 7177 / CIP 109463 / NCPPB 4357 / Et1/99).